Here is a 124-residue protein sequence, read N- to C-terminus: Hydrogenase maturation factor HypA (124 aa).

Position 2 (H2) interacts with Ni(2+). 4 residues coordinate Zn(2+): C78, C81, C97, and C100.

It belongs to the HypA/HybF family.

Involved in the maturation of [NiFe] hydrogenases. Required for nickel insertion into the metal center of the hydrogenase. This chain is Hydrogenase maturation factor HypA, found in Methanococcus vannielii (strain ATCC 35089 / DSM 1224 / JCM 13029 / OCM 148 / SB).